The sequence spans 209 residues: Na(+)-translocating NADH-quinone reductase subunit D (209 aa).

A run of 5 helical transmembrane segments spans residues 42–62, 66–86, 103–123, 131–151, and 178–198; these read LVMTIAVTLVTAFSNFFISLI, IPGSVRIIVQMAIIASLVIVV, VFVGLIITNCIVMGRAEAYAM, FMDGIGNGLGYGVILILVGFL, and NGLFLLAPSAFFIIGLLIWGL.

This sequence belongs to the NqrDE/RnfAE family. In terms of assembly, composed of six subunits; NqrA, NqrB, NqrC, NqrD, NqrE and NqrF.

The protein resides in the cell inner membrane. The catalysed reaction is a ubiquinone + n Na(+)(in) + NADH + H(+) = a ubiquinol + n Na(+)(out) + NAD(+). Functionally, NQR complex catalyzes the reduction of ubiquinone-1 to ubiquinol by two successive reactions, coupled with the transport of Na(+) ions from the cytoplasm to the periplasm. NqrA to NqrE are probably involved in the second step, the conversion of ubisemiquinone to ubiquinol. The polypeptide is Na(+)-translocating NADH-quinone reductase subunit D (Proteus mirabilis (strain HI4320)).